A 133-amino-acid chain; its full sequence is S-protein homolog 9 (133 aa).

The signal sequence occupies residues 1–20 (MNRLSCFLLVIGLCIGLSNA).

The protein belongs to the plant self-incompatibility (S1) protein family.

Its subcellular location is the secreted. The protein is S-protein homolog 9 of Arabidopsis thaliana (Mouse-ear cress).